A 158-amino-acid polypeptide reads, in one-letter code: S-ribosylhomocysteine lyase (158 aa).

The Fe cation site is built by H54, H58, and C125.

It belongs to the LuxS family. As to quaternary structure, homodimer. The cofactor is Fe cation.

It catalyses the reaction S-(5-deoxy-D-ribos-5-yl)-L-homocysteine = (S)-4,5-dihydroxypentane-2,3-dione + L-homocysteine. Involved in the synthesis of autoinducer 2 (AI-2) which is secreted by bacteria and is used to communicate both the cell density and the metabolic potential of the environment. The regulation of gene expression in response to changes in cell density is called quorum sensing. Catalyzes the transformation of S-ribosylhomocysteine (RHC) to homocysteine (HC) and 4,5-dihydroxy-2,3-pentadione (DPD). The protein is S-ribosylhomocysteine lyase of Lactococcus lactis subsp. cremoris (strain MG1363).